The primary structure comprises 280 residues: Polyamine aminopropyltransferase (280 aa).

Positions 2–235 (GGWIDEEHRG…GWWSWTFAAV (234 aa)) constitute a PABS domain. Position 29 (Gln-29) interacts with S-methyl-5'-thioadenosine. Residues His-60 and Asp-84 each coordinate spermidine. S-methyl-5'-thioadenosine-binding positions include Glu-104 and 136–137 (DG). Asp-155 functions as the Proton acceptor in the catalytic mechanism. An S-methyl-5'-thioadenosine-binding site is contributed by Pro-162.

The protein belongs to the spermidine/spermine synthase family. As to quaternary structure, homodimer or homotetramer.

It is found in the cytoplasm. It carries out the reaction S-adenosyl 3-(methylsulfanyl)propylamine + putrescine = S-methyl-5'-thioadenosine + spermidine + H(+). The protein operates within amine and polyamine biosynthesis; spermidine biosynthesis; spermidine from putrescine: step 1/1. In terms of biological role, catalyzes the irreversible transfer of a propylamine group from the amino donor S-adenosylmethioninamine (decarboxy-AdoMet) to putrescine (1,4-diaminobutane) to yield spermidine. This chain is Polyamine aminopropyltransferase, found in Parasynechococcus marenigrum (strain WH8102).